A 1616-amino-acid polypeptide reads, in one-letter code: Replicase large subunit (1616 aa).

Residues 50 to 466 (FSKSINEEQT…LITKLSMLKD (417 aa)) are methyltransferase. Residues 72 to 281 (TFYNTQLAVH…HSYSNLLKYV (210 aa)) form the Alphavirus-like MT domain. One can recognise a (+)RNA virus helicase ATP-binding domain in the interval 800-962 (MVYSDMAKLR…KLIVDETEKR (163 aa)). Residues 828–1084 (TLVDGVPGCG…RHTRCFKYYT (257 aa)) form a helicase region. 832-839 (GVPGCGKT) is a binding site for ATP. The (+)RNA virus helicase C-terminal domain maps to 963 to 1115 (RTTLRCPVDV…DVYMVDSVSA (153 aa)). A RdRp catalytic domain is found at 1385–1498 (MEVLELDVSK…YLPKGCELPN (114 aa)).

The protein belongs to the ssRNA positive-strand viruses RNA-directed RNA polymerase family. As to quaternary structure, heterodimer of a large and a small subunit.

The catalysed reaction is RNA(n) + a ribonucleoside 5'-triphosphate = RNA(n+1) + diphosphate. It catalyses the reaction ATP + H2O = ADP + phosphate + H(+). Its function is as follows. Is an RNA-dependent RNA polymerase active in viral RNA replication. Is a methyltransferase active in RNA capping and an RNA helicase. Methyltransferase displays a cytoplasmic capping enzyme activity. This function is necessary since all viral RNAs are synthesized in the cytoplasm, and host capping enzymes are restricted to the nucleus. Helicase region probably exhibits NTPase and RNA unwinding activities (Potential). It also acts as a suppressor of RNA-mediated gene silencing, also known as post-transcriptional gene silencing (PTGS), a mechanism of plant viral defense that limits the accumulation of viral RNAs. May mediate silencing suppression through either inhibition of HEN1-mediated siRNA or siRNA demethylation. This chain is Replicase large subunit, found in Tobamovirus Ob.